Reading from the N-terminus, the 1813-residue chain is Sucrase-isomaltase, intestinal (1813 aa).

Over 1-12 (MARKKSSGLKIT) the chain is Cytoplasmic. S7 bears the Phosphoserine; by PKA mark. The chain crosses the membrane as a helical; Signal-anchor for type II membrane protein span at residues 13-32 (LIVLLAIVTIIAIALVAILP). Residues 33-1813 (TKTPAVELVS…LDEPIEISWT (1781 aa)) lie on the Lumenal side of the membrane. The region spanning 46–95 (GKCPSAENDRLDEKINCIPDQFPTQALCAMQGCCWNPRNESPTPWCSFAN) is the P-type 1 domain. 3 disulfides stabilise this stretch: C48-C79, C62-C78, and C73-C91. Residues 95-991 (NNHGYEFEKI…DLELNTATAR (897 aa)) are isomaltase. An N-linked (GlcNAc...) asparagine glycan is attached at N127. Residues D250 and D374 each coordinate substrate. Position 377 is a sulfotyrosine (Y377). An N-linked (GlcNAc...) asparagine glycan is attached at N388. Residue D491 is the Nucleophile; for isomaltase activity of the active site. A disulfide bridge links C506 with C531. R574 serves as a coordination point for substrate. The active-site For isomaltase activity is D590. C621 and C632 are oxidised to a cystine. H648 serves as a coordination point for substrate. Residues N669, N791, N896, and N911 are each glycosylated (N-linked (GlcNAc...) asparagine). Positions 917 to 962 (NQVSLDSEKIDCFPDNNPENKQNCEERGCLWEPNSAAEGPRCYFPK) constitute a P-type 2 domain. The interval 992 to 1813 (IKMPSNPISV…LDEPIEISWT (822 aa)) is sucrase. N-linked (GlcNAc...) asparagine glycosylation is found at N1221 and N1289. At Y1294 the chain carries Sulfotyrosine. Residues N1326 and N1340 are each glycosylated (N-linked (GlcNAc...) asparagine). A sulfotyrosine mark is found at Y1368 and Y1371. Catalysis depends on D1380, which acts as the Nucleophile; for sucrase activity. Catalysis depends on E1383, which acts as the For sucrase activity. N-linked (GlcNAc...) asparagine glycosylation is present at N1432. D1486 functions as the Proton donor; for sucrase activity in the catalytic mechanism. N-linked (GlcNAc...) asparagine glycosylation is found at N1521, N1545, N1558, N1703, and N1772.

The protein belongs to the glycosyl hydrolase 31 family. In terms of assembly, the resulting sucrase and isomaltase subunits stay associated with one another in a complex by non-covalent linkages. The precursor is proteolytically cleaved when exposed to pancreatic proteases in the intestinal lumen. In terms of processing, sulfated.

It is found in the apical cell membrane. The enzyme catalyses Hydrolysis of sucrose and maltose by an alpha-D-glucosidase-type action.. It catalyses the reaction Hydrolysis of (1-&gt;6)-alpha-D-glucosidic linkages in some oligosaccharides produced from starch and glycogen by alpha-amylase, and in isomaltose.. Functionally, plays an important role in the final stage of carbohydrate digestion. Isomaltase activity is specific for both alpha-1,4- and alpha-1,6-oligosaccharides. This is Sucrase-isomaltase, intestinal (SI) from Suncus murinus (Asian house shrew).